A 466-amino-acid polypeptide reads, in one-letter code: FAD-dependent monooxygenase dpfgE (466 aa).

A signal peptide spans 1-23 (MSQKPFRVIIVGGSVTGLTLAHS). Positions 35, 49, and 108 each coordinate FAD. N-linked (GlcNAc...) asparagine glycans are attached at residues N128 and N192. The FAD site is built by D312 and A325. N376 carries an N-linked (GlcNAc...) asparagine glycan. Residues 443–465 (GVVRNVFFLLAATVIVAWVCRLW) form a helical membrane-spanning segment.

Belongs to the paxM FAD-dependent monooxygenase family. The cofactor is FAD.

The protein resides in the membrane. It functions in the pathway secondary metabolite biosynthesis; terpenoid biosynthesis. In terms of biological role, FAD-dependent monooxygenase; part of the gene cluster that mediates the biosynthesis of diterpenoid pyrones. The first step of the pathway is the synthesis of the alpha-pyrone moiety by the polyketide synthase dpfgA via condensation of one acetyl-CoA starter unit with 3 malonyl-CoA units and 2 methylations. The alpha-pyrone is then combined with geranylgeranyl pyrophosphate (GGPP) formed by the GGPP synthase dpfgD through the action of the prenyltransferase dpfgC to yield a linear alpha-pyrone diterpenoid. Subsequent steps in the diterpenoid pyrone biosynthetic pathway involve the decalin core formation, which is initiated by the epoxidation of the C10-C11 olefin by the FAD-dependent oxidoreductase dpfgE, and is followed by a cyclization cascade catalyzed by the terpene cyclase dpfgB. The short chain dehydrogenase/reductase dpfgG then oxidizes the 8S hydroxy group to a ketone and the short chain dehydrogenase/reductase dpfgH reduces the ketone to the 8R hydroxy group to yield higginsianin B. Higginsianin B is further methylated by the methyltransferase dpfgI to produce the intermediate named FDDP B. The cytochrome P450 monooxygenase dfgpJ then catalyzes a three-step oxidation at C-27 to generate a carboxylic acid as well as C-26 hydroxylation. Finally, methyltransferase dpfgK methylates the carboxylic acid generated by dpfgJ, yielding the final diterpenoid pyrones from the pathway which were named FDDP D and FDDP E. This Gibberella zeae (strain ATCC MYA-4620 / CBS 123657 / FGSC 9075 / NRRL 31084 / PH-1) (Wheat head blight fungus) protein is FAD-dependent monooxygenase dpfgE.